Consider the following 1162-residue polypeptide: Carbamoyl phosphate synthase large chain (1162 aa).

Positions 1–456 (MPKRTDIKSI…SLQKALRGLE (456 aa)) are carboxyphosphate synthetic domain. The ATP site is built by Arg-129, Arg-222, Gly-228, Gly-229, Glu-261, Val-263, Glu-268, Gly-294, Val-295, His-296, Gln-338, and Glu-352. Residues 186–381 (ETEWQLGEVE…IAKVAAKLAV (196 aa)) enclose the ATP-grasp 1 domain. Mg(2+) contacts are provided by Gln-338, Glu-352, and Asn-354. Residues Gln-338, Glu-352, and Asn-354 each contribute to the Mn(2+) site. Positions 457-613 (TGLTGFDEIA…PFVGQPRSEA (157 aa)) are oligomerization domain. Residues 614–1025 (EVSDRKKVVI…AFAKAQLGAG (412 aa)) form a carbamoyl phosphate synthetic domain region. In terms of domain architecture, ATP-grasp 2 spans 742–954 (QKLLIKLDLN…IAKVAARIMA (213 aa)). 10 residues coordinate ATP: Arg-778, Thr-838, Leu-840, Glu-845, Gly-870, Ile-871, His-872, Ser-873, Gln-913, and Glu-925. 3 residues coordinate Mg(2+): Gln-913, Glu-925, and Asn-927. Mn(2+)-binding residues include Gln-913, Glu-925, and Asn-927. Residues 1026–1162 (VELPREGTVF…VRPLQDYFRS (137 aa)) enclose the MGS-like domain. The allosteric domain stretch occupies residues 1026–1162 (VELPREGTVF…VRPLQDYFRS (137 aa)).

It belongs to the CarB family. Composed of two chains; the small (or glutamine) chain promotes the hydrolysis of glutamine to ammonia, which is used by the large (or ammonia) chain to synthesize carbamoyl phosphate. Tetramer of heterodimers (alpha,beta)4. Mg(2+) is required as a cofactor. Requires Mn(2+) as cofactor.

The enzyme catalyses hydrogencarbonate + L-glutamine + 2 ATP + H2O = carbamoyl phosphate + L-glutamate + 2 ADP + phosphate + 2 H(+). It catalyses the reaction hydrogencarbonate + NH4(+) + 2 ATP = carbamoyl phosphate + 2 ADP + phosphate + 2 H(+). It participates in amino-acid biosynthesis; L-arginine biosynthesis; carbamoyl phosphate from bicarbonate: step 1/1. It functions in the pathway pyrimidine metabolism; UMP biosynthesis via de novo pathway; (S)-dihydroorotate from bicarbonate: step 1/3. Functionally, large subunit of the glutamine-dependent carbamoyl phosphate synthetase (CPSase). CPSase catalyzes the formation of carbamoyl phosphate from the ammonia moiety of glutamine, carbonate, and phosphate donated by ATP, constituting the first step of 2 biosynthetic pathways, one leading to arginine and/or urea and the other to pyrimidine nucleotides. The large subunit (synthetase) binds the substrates ammonia (free or transferred from glutamine from the small subunit), hydrogencarbonate and ATP and carries out an ATP-coupled ligase reaction, activating hydrogencarbonate by forming carboxy phosphate which reacts with ammonia to form carbamoyl phosphate. In Brucella melitensis biotype 1 (strain ATCC 23456 / CCUG 17765 / NCTC 10094 / 16M), this protein is Carbamoyl phosphate synthase large chain.